Consider the following 346-residue polypeptide: tRNA N6-adenosine threonylcarbamoyltransferase (346 aa).

The Fe cation site is built by H111 and H115. Residues 134-138 (LVSGG), D167, G180, and N279 each bind substrate. Position 307 (D307) interacts with Fe cation.

This sequence belongs to the KAE1 / TsaD family. The cofactor is Fe(2+).

Its subcellular location is the cytoplasm. It catalyses the reaction L-threonylcarbamoyladenylate + adenosine(37) in tRNA = N(6)-L-threonylcarbamoyladenosine(37) in tRNA + AMP + H(+). Its function is as follows. Required for the formation of a threonylcarbamoyl group on adenosine at position 37 (t(6)A37) in tRNAs that read codons beginning with adenine. Is involved in the transfer of the threonylcarbamoyl moiety of threonylcarbamoyl-AMP (TC-AMP) to the N6 group of A37, together with TsaE and TsaB. TsaD likely plays a direct catalytic role in this reaction. The chain is tRNA N6-adenosine threonylcarbamoyltransferase from Burkholderia ambifaria (strain ATCC BAA-244 / DSM 16087 / CCUG 44356 / LMG 19182 / AMMD) (Burkholderia cepacia (strain AMMD)).